A 73-amino-acid chain; its full sequence is Large ribosomal subunit protein bL31 (73 aa).

It belongs to the bacterial ribosomal protein bL31 family. Type A subfamily. As to quaternary structure, part of the 50S ribosomal subunit.

Functionally, binds the 23S rRNA. The sequence is that of Large ribosomal subunit protein bL31 (rpmE) from Jannaschia sp. (strain CCS1).